The chain runs to 719 residues: MLAPAAPAKDVVSADEKEEIIAKRKFRMKNVDAMRMSSLANDRMAFNKKCNALAMKFVKSAGIGTDALQLTCFQELVRHFNPIAAVVVGVKREPNSNVQAEKKTIPKVKTIQTPTQSMESVRLLQEKKASATEEQSAESASIMKHFANTIPNSTPTQSVKDVLTAAASKGQFKSSAEIFSHFPSEPSPSKPRATREGSQPSDYTYCTYLTPCILCEKALLMRESIAMTDNEAVKVLMAAVMSGHFRMATAEKAIRHERLRMCYDHVDFVYEMMCDAFEAKTESEINEMPPDRLMRGHDIYRALKRVGDLHKGKVTSNTPLYSFKNSIKSYYRNHVPRMVNGSLSKPSPKPFSELVALLQSVPPSTNLNELLNHNLSLSDADKQELIQLINGKDNRFTSRRRKIEDILDNKFAAAAAKAYRDHSEDAPSEPYIPNQSEMQNTVERRKRKLHSPEQDDAGSSSISWNAKKTKTPIDYVHLATRVLEGHSIADEALLHKSKVSYARNAFGEKPSSPTPPSAPLKFCVVNGKKYLRFENGTGPPKVVVQGNVVLRTNTLKDALTTAPRAQNQPSTSTDSSSSSEMEGIRQSFGAPQKEEEEEELVPTLLQNKPTHVESSSPVEKKPPTKTNVEKPAVRLGRMLTTAFGSMSYRTRKSVENKTDLLNQPTSASPRRMIKVVRNRNPHLAKQVAAAPSEPKHIPPTHMEKKPEELLMDPKPEPIF.

4 disordered regions span residues 179–199 (FSHF…EGSQ), 419–464 (YRDH…SISW), 559–626 (LTTA…PTKT), and 684–719 (AKQV…EPIF). Over residues 570–579 (STSTDSSSSS) the composition is skewed to low complexity. Over residues 604-617 (LLQNKPTHVESSSP) the composition is skewed to polar residues. A compositionally biased stretch (basic and acidic residues) spans 693 to 719 (EPKHIPPTHMEKKPEELLMDPKPEPIF).

It localises to the nucleus. Its function is as follows. Synthetic multivulva (synMuv) class A protein. SynMuv proteins are required to repress the induction of vulval development. Acts redundantly with SynMuv class B protein lin-15B, and lin-35 to negatively regulate vulval development, most likely through antagonization of the Ras-signaling pathway. May also negatively regulate vulval development in association with other SynMuv class B proteins such as dpl-1 and efl-1. Regulates let-23 basal activity. Required for the correct expression and/or stability of lin-56. In Caenorhabditis elegans, this protein is Protein lin-15A.